Consider the following 563-residue polypeptide: MSYLLAGLRAGIERALRGAVEAARPDLGLDSGTAIPPFTVEVPREKNHGDFATNLALLLTKPARRSPRQIAEILVSHLSLPELLVKEVTVAGPGFINFRLDPNWLHGVLPEIETWGEHYGRRNLGGGRKVQVEFVSANPTGLLHMGNARGAALGDSIAALLSFVGFDVTREFYVNDAGHQVENLALSMEARYFQALGRDWPVPEDGYHGEDLIDTAGRFVAEHGDRFASGDPDERRGALLRFALEEKLAAMRATLESFGVRYDVWFSEQSLYDRGVVGETLELLKKRGHLYERDGALWFKAGAFGGDKDEVLVRRNGVPTYFAADIAYHKDKYDRGFDWVINVWGADHHGHVPRMKGALAALGYDPDALDVVIMQLVRLYRGGEIVRMSKRTGRYVTLDELLEEVGRDAARYFFVTRGADSHLDFDLDLAKSRTNENPVYYIQYAHARISSIFRQLEERGRTAPGYRKIPDVTLLKEEAERALIRRLADFPDEVAQAAYDLAPHRIAHYVHDLAGLFHHFYNAHRVLGAGDGLEEARLMLVNCTRVVLRNALTLLGVSAPERM.

A 'HIGH' region motif is present at residues 137–147 (ANPTGLLHMGN).

It belongs to the class-I aminoacyl-tRNA synthetase family. Monomer.

It is found in the cytoplasm. The enzyme catalyses tRNA(Arg) + L-arginine + ATP = L-arginyl-tRNA(Arg) + AMP + diphosphate. This Desulforudis audaxviator (strain MP104C) protein is Arginine--tRNA ligase.